A 247-amino-acid polypeptide reads, in one-letter code: UPF0280 protein MmarC7_0482 (247 aa).

The protein belongs to the UPF0280 family.

This is UPF0280 protein MmarC7_0482 from Methanococcus maripaludis (strain C7 / ATCC BAA-1331).